The following is a 567-amino-acid chain: tRNA(His) guanylyltransferase 1 (567 aa).

Mg(2+) is bound by residues D342, G343, and D389. Residues 342 to 347 (DGCHFH) and 388 to 389 (SD) each bind GTP. Residues K397 and K403 each participate in a glycyl lysine isopeptide (Lys-Gly) (interchain with G-Cter in ubiquitin) cross-link.

The protein belongs to the tRNA(His) guanylyltransferase family. It depends on Mg(2+) as a cofactor.

The protein localises to the nucleus. It localises to the nucleoplasm. It carries out the reaction a 5'-end ribonucleotide-tRNA(His) + GTP + ATP + H2O = a 5'-end phospho-guanosine-ribonucleotide-tRNA(His) + AMP + 2 diphosphate + H(+). Its function is as follows. Adds a GMP to the 5'-end of tRNA(His) after transcription and RNase P cleavage. This chain is tRNA(His) guanylyltransferase 1 (THG1), found in Arabidopsis thaliana (Mouse-ear cress).